Reading from the N-terminus, the 208-residue chain is MKIVEVKHPLVKHKLGLMRAHDISTKRFRELASEVGSLLTYVATADMETEKVTIEGWCGPVEIDQIKGKKITVVPILRAGLGMMDGVLENLPSARISVVGVYRDENTLTPVPYFHKLVSSIDERMALVVDPMLATGGSMIATIDLLKKAGCPCIKVLVLVAAPEGIAALEKAHPDVELYTAAIDKGLNEKGYIMPGLGDAGDKIFGTK.

5-phospho-alpha-D-ribose 1-diphosphate is bound by residues Arg-78, Arg-103, and 130 to 138 (DPMLATGGS). Residues Ile-193 and 198-200 (GDA) each bind uracil. Position 199 (Asp-199) interacts with 5-phospho-alpha-D-ribose 1-diphosphate.

The protein belongs to the UPRTase family. It depends on Mg(2+) as a cofactor.

It catalyses the reaction UMP + diphosphate = 5-phospho-alpha-D-ribose 1-diphosphate + uracil. It functions in the pathway pyrimidine metabolism; UMP biosynthesis via salvage pathway; UMP from uracil: step 1/1. Its activity is regulated as follows. Allosterically activated by GTP. In terms of biological role, catalyzes the conversion of uracil and 5-phospho-alpha-D-ribose 1-diphosphate (PRPP) to UMP and diphosphate. The protein is Uracil phosphoribosyltransferase of Sodalis glossinidius (strain morsitans).